We begin with the raw amino-acid sequence, 492 residues long: Probable endopolygalacturonase D (492 aa).

An N-terminal signal peptide occupies residues Met-1 to Gly-16. A disulfide bridge links Cys-151 with Cys-166. PbH1 repeat units lie at residues Gly-216–Asp-238, Met-258–Ser-280, Thr-281–Glu-319, and Ser-320–Ser-341. An N-linked (GlcNAc...) asparagine glycan is attached at Asn-292. Asp-334 (proton donor) is an active-site residue. Cys-336 and Cys-352 are oxidised to a cystine. His-356 is an active-site residue. PbH1 repeat units lie at residues Val-371–Thr-392, Val-400–Gln-422, and Thr-434–Gly-478. Asn-407 and Asn-441 each carry an N-linked (GlcNAc...) asparagine glycan. Disulfide bonds link Cys-461/Cys-466 and Cys-484/Cys-491.

This sequence belongs to the glycosyl hydrolase 28 family.

The protein resides in the secreted. It catalyses the reaction (1,4-alpha-D-galacturonosyl)n+m + H2O = (1,4-alpha-D-galacturonosyl)n + (1,4-alpha-D-galacturonosyl)m.. Its function is as follows. Involved in maceration and soft-rotting of plant tissue. Hydrolyzes the 1,4-alpha glycosidic bonds of de-esterified pectate in the smooth region of the plant cell wall. This chain is Probable endopolygalacturonase D (pgaD), found in Aspergillus oryzae (strain ATCC 42149 / RIB 40) (Yellow koji mold).